We begin with the raw amino-acid sequence, 250 residues long: Transmembrane protein 106C (250 aa).

The interval 1 to 25 (MGSQHSAAARPSSCRRKQEDDRDGL) is disordered. G2 carries N-myristoyl glycine lipidation. Residues 16–25 (RKQEDDRDGL) show a composition bias toward basic and acidic residues. A helical transmembrane segment spans residues 87-107 (YVLLSILLCLLASGLVVFFLF). Residues N173 and N186 are each glycosylated (N-linked (GlcNAc...) asparagine). The helical transmembrane segment at 197–217 (FSYVYFFCTVPEILVHNIVIF) threads the bilayer.

Belongs to the TMEM106 family. Interacts with TMEM106B.

It localises to the endoplasmic reticulum membrane. The protein resides in the membrane. This chain is Transmembrane protein 106C (TMEM106C), found in Homo sapiens (Human).